The chain runs to 169 residues: Protein Flattop homolog (169 aa).

The tract at residues 53-169 is disordered; sequence IPRSSRSPWG…SPKLATPEPC (117 aa). The span at 119–130 shows a compositional bias: polar residues; sequence VQASPRNASPLQ.

It belongs to the Flattop family.

Its subcellular location is the cytoplasm. It is found in the cytoskeleton. The protein resides in the cilium basal body. The protein localises to the cell projection. It localises to the cilium. Its subcellular location is the apical cell membrane. In terms of biological role, acts as a regulator of cilium basal body docking and positioning in mono- and multiciliated cells. The protein is Protein Flattop homolog of Nematostella vectensis (Starlet sea anemone).